Reading from the N-terminus, the 344-residue chain is L-rhamnose-proton symporter (344 aa).

10 helical membrane-spanning segments follow: residues 4–24, 38–58, 68–88, 101–121, 137–157, 175–195, 214–234, 259–279, 290–310, and 323–343; these read AITM…CFYA, WSVG…ALLL, FSLS…IGNI, MGIG…TPII, TLLG…AGQL, LVLA…MNAA, LPSY…FCFI, VLLS…YAWG, ISWM…GLVL, and VLSL…MGMA.

Belongs to the L-rhamnose transporter (TC 2.A.7.6) family.

The protein resides in the cell inner membrane. The catalysed reaction is L-rhamnopyranose(in) + H(+)(in) = L-rhamnopyranose(out) + H(+)(out). Its function is as follows. Uptake of L-rhamnose across the cytoplasmic membrane with the concomitant transport of protons into the cell (symport system). This Escherichia coli O157:H7 protein is L-rhamnose-proton symporter.